We begin with the raw amino-acid sequence, 616 residues long: Zinc metalloproteinase-disintegrin-like ecarin (616 aa).

A signal peptide spans Met-1 to Ser-20. The propeptide occupies Ile-21–Ile-190. The region spanning Lys-201–Pro-397 is the Peptidase M12B domain. Position 204 (Glu-204) interacts with Ca(2+). Asn-219 and Asn-261 each carry an N-linked (GlcNAc...) asparagine glycan. Asp-288 lines the Ca(2+) pocket. N-linked (GlcNAc...) asparagine glycosylation is found at Asn-295 and Asn-326. 3 cysteine pairs are disulfide-bonded: Cys-312/Cys-392, Cys-352/Cys-376, and Cys-354/Cys-359. His-337 contacts Zn(2+). Glu-338 is a catalytic residue. His-341 and His-347 together coordinate Zn(2+). Cys-392, Val-407, Asn-410, Ile-412, Glu-414, Glu-417, and Asp-420 together coordinate Ca(2+). The Disintegrin domain maps to Pro-405 to Asn-491. Disulfide bonds link Cys-408–Cys-437, Cys-419–Cys-432, Cys-421–Cys-427, Cys-431–Cys-454, Cys-445–Cys-451, Cys-450–Cys-476, Cys-463–Cys-483, Cys-470–Cys-502, Cys-495–Cys-507, Cys-514–Cys-567, Cys-529–Cys-578, Cys-542–Cys-555, Cys-562–Cys-604, and Cys-598–Cys-609. The short motif at Asp-469 to Asp-471 is the D/ECD-tripeptide element. Residues Asp-471, Val-472, and Asn-486 each contribute to the Ca(2+) site. Asn-497 is a glycosylation site (N-linked (GlcNAc...) asparagine).

It belongs to the venom metalloproteinase (M12B) family. P-III subfamily. P-IIIa sub-subfamily. As to quaternary structure, monomer. The cofactor is Zn(2+). As to expression, expressed by the venom gland.

The protein resides in the secreted. Functionally, snake venom zinc metalloproteinase that catalyzes the conversion of prothrombin (F2) to alpha-thrombin through formation of a thrombin intermediate, thereby functioning as a procoagulant protein. Has a low Km for prothrombin and a high kcat. Cleaves the 320-Arg-Ile-321 bond in prothrombin and produces meizothrombin which is ultimately converted to alpha-thrombin by autolysis. This Echis carinatus (Saw-scaled viper) protein is Zinc metalloproteinase-disintegrin-like ecarin.